Consider the following 352-residue polypeptide: Carbohydrate sulfotransferase 11 (352 aa).

At 1 to 16 (MKQTILDLMRMSRICR) the chain is on the cytoplasmic side. A helical; Signal-anchor for type II membrane protein transmembrane segment spans residues 17 to 37 (MVLATCLGSFILVIFYFQSMF). At 38–352 (QPVMRRNPFA…YSIPSYLKLQ (315 aa)) the chain is on the lumenal side. 3'-phosphoadenylyl sulfate contacts are provided by residues 124–130 (PKVACTN) and 186–194 (REPFERLVS). N205, N223, N321, and N342 each carry an N-linked (GlcNAc...) asparagine glycan.

The protein belongs to the sulfotransferase 2 family.

The protein localises to the golgi apparatus membrane. The catalysed reaction is chondroitin beta-D-glucuronate + n 3'-phosphoadenylyl sulfate = chondroitin 4'-sulfate + n adenosine 3',5'-bisphosphate + n H(+). Its function is as follows. Catalyzes the transfer of sulfate to position 4 of the N-acetylgalactosamine (GalNAc) residue of chondroitin. In Danio rerio (Zebrafish), this protein is Carbohydrate sulfotransferase 11 (chst11).